A 356-amino-acid polypeptide reads, in one-letter code: MFS-type transporter tazK (356 aa).

The next 9 helical transmembrane spans lie at 12–32 (LPFF…ALGH), 42–62 (FLGG…LADF), 69–89 (GVAV…GAIT), 102–122 (MTAW…FIIL), 178–198 (ILLS…LLFV), 211–231 (GAID…VGAF), 257–277 (LHPM…FAWT), 288–308 (ILAG…SLAY), and 320–340 (AISG…LFAP).

The protein belongs to the major facilitator superfamily. CAR1 family.

It localises to the membrane. In terms of biological role, MFS-type transporter; part of the gene cluster that mediates the biosynthesis of azaterrilone A and other azaphilones, a class of fungal metabolites characterized by a highly oxygenated pyrano-quinone bicyclic core and exhibiting a broad range of bioactivities. In Aspergillus terreus (strain NIH 2624 / FGSC A1156), this protein is MFS-type transporter tazK.